The chain runs to 452 residues: Glutamyl-tRNA(Gln) amidotransferase subunit A (452 aa).

Catalysis depends on charge relay system residues Lys-56 and Ser-131. Ser-155 serves as the catalytic Acyl-ester intermediate.

It belongs to the amidase family. GatA subfamily. As to quaternary structure, heterotrimer of A, B and C subunits.

The catalysed reaction is L-glutamyl-tRNA(Gln) + L-glutamine + ATP + H2O = L-glutaminyl-tRNA(Gln) + L-glutamate + ADP + phosphate + H(+). Its function is as follows. Allows the formation of correctly charged Gln-tRNA(Gln) through the transamidation of misacylated Glu-tRNA(Gln) in organisms which lack glutaminyl-tRNA synthetase. The reaction takes place in the presence of glutamine and ATP through an activated gamma-phospho-Glu-tRNA(Gln). This Campylobacter hominis (strain ATCC BAA-381 / DSM 21671 / CCUG 45161 / LMG 19568 / NCTC 13146 / CH001A) protein is Glutamyl-tRNA(Gln) amidotransferase subunit A.